Reading from the N-terminus, the 194-residue chain is Endoribonuclease YbeY (194 aa).

Zn(2+)-binding residues include H151, H155, and H161.

It belongs to the endoribonuclease YbeY family. Zn(2+) is required as a cofactor.

It localises to the cytoplasm. Functionally, single strand-specific metallo-endoribonuclease involved in late-stage 70S ribosome quality control and in maturation of the 3' terminus of the 16S rRNA. The protein is Endoribonuclease YbeY of Gloeobacter violaceus (strain ATCC 29082 / PCC 7421).